A 196-amino-acid chain; its full sequence is FMN-dependent NADH:quinone oxidoreductase (196 aa).

FMN-binding positions include S10, 16–18 (SQS), 93–96 (MYNF), and 137–140 (TRGG).

The protein belongs to the azoreductase type 1 family. As to quaternary structure, homodimer. The cofactor is FMN.

The enzyme catalyses 2 a quinone + NADH + H(+) = 2 a 1,4-benzosemiquinone + NAD(+). The catalysed reaction is N,N-dimethyl-1,4-phenylenediamine + anthranilate + 2 NAD(+) = 2-(4-dimethylaminophenyl)diazenylbenzoate + 2 NADH + 2 H(+). In terms of biological role, quinone reductase that provides resistance to thiol-specific stress caused by electrophilic quinones. Its function is as follows. Also exhibits azoreductase activity. Catalyzes the reductive cleavage of the azo bond in aromatic azo compounds to the corresponding amines. This Shewanella amazonensis (strain ATCC BAA-1098 / SB2B) protein is FMN-dependent NADH:quinone oxidoreductase.